We begin with the raw amino-acid sequence, 302 residues long: RNA polymerase sigma factor RpoH (302 aa).

A sigma-70 factor domain-2 region spans residues 57-126; that stretch reads LVTSHLRLVA…IQEYILRSWS (70 aa). The Interaction with polymerase core subunit RpoC signature appears at 81–84; that stretch reads ELIS. The sigma-70 factor domain-4 stretch occupies residues 235-286; it reads AMDKLNDREKHILTERRLSDNPKTLEELSQVYGVSRERVRQIEVRAFDKLQK. Positions 259–278 form a DNA-binding region, H-T-H motif; it reads LEELSQVYGVSRERVRQIEV.

Belongs to the sigma-70 factor family. RpoH subfamily. In terms of assembly, interacts with the RNA polymerase core enzyme.

It is found in the cytoplasm. Its function is as follows. Sigma factors are initiation factors that promote the attachment of RNA polymerase to specific initiation sites and are then released. This sigma factor is involved in regulation of expression of heat shock genes. The protein is RNA polymerase sigma factor RpoH of Zymomonas mobilis subsp. mobilis (strain ATCC 31821 / ZM4 / CP4).